A 122-amino-acid polypeptide reads, in one-letter code: Large ribosomal subunit protein uL14 (122 aa).

Belongs to the universal ribosomal protein uL14 family. In terms of assembly, part of the 50S ribosomal subunit. Forms a cluster with proteins L3 and L19. In the 70S ribosome, L14 and L19 interact and together make contacts with the 16S rRNA in bridges B5 and B8.

In terms of biological role, binds to 23S rRNA. Forms part of two intersubunit bridges in the 70S ribosome. The sequence is that of Large ribosomal subunit protein uL14 from Myxococcus xanthus (strain DK1622).